The chain runs to 161 residues: Non-secretory ribonuclease (161 aa).

The N-terminal stretch at 1–27 (MVPKLFTSQICLLLLLGLMGVEGSLHA) is a signal peptide. A glycan (C-linked (Man) tryptophan) is linked at Trp34. The active-site Proton acceptor is the His42. Residue Asn44 is glycosylated (N-linked (GlcNAc...) asparagine). Disulfide bonds link Cys50–Cys110, Cys64–Cys123, Cys82–Cys138, and Cys89–Cys98. Tyr60 bears the 3'-nitrotyrosine mark. Position 65 to 69 (65 to 69 (KNQNT)) interacts with substrate. Residues Asn86, Asn92, Asn111, and Asn119 are each glycosylated (N-linked (GlcNAc...) asparagine). Catalysis depends on His156, which acts as the Proton donor.

This sequence belongs to the pancreatic ribonuclease family. In terms of assembly, interacts with and forms a tight 1:1 complex with RNH1. Dimerization of two such complexes may occur.

It is found in the lysosome. It localises to the cytoplasmic granule. The catalysed reaction is an [RNA] containing cytidine + H2O = an [RNA]-3'-cytidine-3'-phosphate + a 5'-hydroxy-ribonucleotide-3'-[RNA].. It catalyses the reaction an [RNA] containing uridine + H2O = an [RNA]-3'-uridine-3'-phosphate + a 5'-hydroxy-ribonucleotide-3'-[RNA].. Functionally, this is a non-secretory ribonuclease. It is a pyrimidine specific nuclease with a slight preference for U. Cytotoxin and helminthotoxin. Possesses a wide variety of biological activities. The protein is Non-secretory ribonuclease (RNASE2) of Nomascus leucogenys (Northern white-cheeked gibbon).